Reading from the N-terminus, the 65-residue chain is Small ribosomal subunit protein bS21 (65 aa).

The protein belongs to the bacterial ribosomal protein bS21 family.

The chain is Small ribosomal subunit protein bS21 from Flavobacterium psychrophilum (strain ATCC 49511 / DSM 21280 / CIP 103535 / JIP02/86).